A 158-amino-acid chain; its full sequence is Transcription elongation factor GreA (158 aa).

Residues 4–75 (QKQYPMTQEG…QRVENMLRNA (72 aa)) are a coiled coil.

Belongs to the GreA/GreB family.

Necessary for efficient RNA polymerase transcription elongation past template-encoded arresting sites. The arresting sites in DNA have the property of trapping a certain fraction of elongating RNA polymerases that pass through, resulting in locked ternary complexes. Cleavage of the nascent transcript by cleavage factors such as GreA or GreB allows the resumption of elongation from the new 3'terminus. GreA releases sequences of 2 to 3 nucleotides. In Staphylococcus saprophyticus subsp. saprophyticus (strain ATCC 15305 / DSM 20229 / NCIMB 8711 / NCTC 7292 / S-41), this protein is Transcription elongation factor GreA.